A 628-amino-acid polypeptide reads, in one-letter code: Phosphomethylpyrimidine synthase (628 aa).

The segment covering 1 to 14 (MTISDIGSQATTHT) has biased composition (polar residues). The segment at 1–37 (MTISDIGSQATTHTPVKASKADALKTPAHRSETDARF) is disordered. The segment covering 19 to 37 (SKADALKTPAHRSETDARF) has biased composition (basic and acidic residues). Substrate contacts are provided by residues N260, M289, Y318, H354, 374–376 (SRG), 415–418 (DGLR), and E454. H458 contributes to the Zn(2+) binding site. A substrate-binding site is contributed by Y481. Residue H522 coordinates Zn(2+). [4Fe-4S] cluster-binding residues include C602, C605, and C610.

The protein belongs to the ThiC family. As to quaternary structure, homodimer. [4Fe-4S] cluster is required as a cofactor.

The enzyme catalyses 5-amino-1-(5-phospho-beta-D-ribosyl)imidazole + S-adenosyl-L-methionine = 4-amino-2-methyl-5-(phosphooxymethyl)pyrimidine + CO + 5'-deoxyadenosine + formate + L-methionine + 3 H(+). The protein operates within cofactor biosynthesis; thiamine diphosphate biosynthesis. Catalyzes the synthesis of the hydroxymethylpyrimidine phosphate (HMP-P) moiety of thiamine from aminoimidazole ribotide (AIR) in a radical S-adenosyl-L-methionine (SAM)-dependent reaction. This chain is Phosphomethylpyrimidine synthase, found in Psychrobacter cryohalolentis (strain ATCC BAA-1226 / DSM 17306 / VKM B-2378 / K5).